The sequence spans 275 residues: MSALRPSTGTITRGTPTSADLLLQLRERQPLVQCITNAVVTGFTANVLLALGAAPAMTDVPTESGPFARIASGVLINLGTPHAEQREAAVEAAHAARDAGTPWVLDPVAVGALPVRTRLAHELVALSPTIVRGNASEIIALATGGAGGRGVDATDEVEAALDAASLLARTYGTVVAVSGAVDHITDGHRLVRVHTGDAWLTKVTGGGCALGAVMTAFASTDPDPLRAAVAATSGYTIAADIAAEGARGPGSFAVGLLDALDAVTPELVAQSERLS.

Residue methionine 57 participates in substrate binding. 2 residues coordinate ATP: arginine 132 and serine 178. Glycine 205 serves as a coordination point for substrate.

The protein belongs to the Thz kinase family. It depends on Mg(2+) as a cofactor.

It carries out the reaction 5-(2-hydroxyethyl)-4-methylthiazole + ATP = 4-methyl-5-(2-phosphooxyethyl)-thiazole + ADP + H(+). It functions in the pathway cofactor biosynthesis; thiamine diphosphate biosynthesis; 4-methyl-5-(2-phosphoethyl)-thiazole from 5-(2-hydroxyethyl)-4-methylthiazole: step 1/1. In terms of biological role, catalyzes the phosphorylation of the hydroxyl group of 4-methyl-5-beta-hydroxyethylthiazole (THZ). This chain is Hydroxyethylthiazole kinase, found in Clavibacter sepedonicus (Clavibacter michiganensis subsp. sepedonicus).